Consider the following 215-residue polypeptide: Large ribosomal subunit protein uL4c (215 aa).

Positions 48 to 57 (SQRQGTISTK) are enriched in polar residues. The disordered stretch occupies residues 48 to 85 (SQRQGTISTKTRSEVRGGGRKPWRQKGTGRARAGSSRS). The segment covering 65-76 (GGRKPWRQKGTG) has biased composition (basic residues).

Belongs to the universal ribosomal protein uL4 family. In terms of assembly, part of the 50S ribosomal subunit.

The protein localises to the plastid. It is found in the chloroplast. Functionally, probably binds the 23S rRNA. The polypeptide is Large ribosomal subunit protein uL4c (rpl4) (Trieres chinensis (Marine centric diatom)).